The primary structure comprises 870 residues: Probable disease resistance protein At1g59620 (870 aa).

The NB-ARC domain occupies 123–432; sequence DKRNMRQTFS…AAEGMPRPRY (310 aa). 167–174 contributes to the ATP binding site; it reads GMGGIGKT. 6 LRR repeats span residues 543–567, 568–590, 703–726, 735–758, 759–786, and 808–833; these read LQLM…IGLL, IHLR…MQNL, MSGI…IYMP, PWHL…ILEK, LLQL…GFPQ, and MPRL…KFIT.

This sequence belongs to the disease resistance NB-LRR family.

In terms of biological role, probable disease resistance protein. This Arabidopsis thaliana (Mouse-ear cress) protein is Probable disease resistance protein At1g59620.